A 118-amino-acid chain; its full sequence is MAGRSGDRDEDLLKAVRLIKILYQSNPPPSPEGTRQARRNRRRRWRARQRQIHSIGERILSTYLGRSEEPVPLQLPPLERLNLNCSEDCGASGTQGVGSPQISVESPTVLESGTEEQC.

Phosphoserine; by host CK2 is present on S5. The homomultimerization stretch occupies residues 18 to 26 (LIKILYQSN). The tract at residues 23-49 (YQSNPPPSPEGTRQARRNRRRRWRARQ) is disordered. The Nuclear localization signal and RNA-binding (RRE) motif lies at 34–50 (TRQARRNRRRRWRARQR). Positions 36–49 (QARRNRRRRWRARQ) are enriched in basic residues. The short motif at 73–84 (LQLPPLERLNLN) is the Nuclear export signal and binding to XPO1 element. Positions 89 to 118 (CGASGTQGVGSPQISVESPTVLESGTEEQC) are disordered. A phosphoserine; by host mark is found at S92 and S99. Polar residues predominate over residues 92–112 (SGTQGVGSPQISVESPTVLES).

This sequence belongs to the HIV-1 REV protein family. Homomultimer; when bound to the RRE. Multimeric assembly is essential for activity and may involve XPO1. Binds to human KPNB1, XPO1, TNPO1, RANBP5 and IPO7. Interacts with the viral Integrase. Interacts with human KHDRBS1. Interacts with human NAP1; this interaction decreases Rev multimerization and stimulates its activity. Interacts with human DEAD-box helicases DDX3 and DDX24; these interactions may serve for viral RNA export to the cytoplasm and packaging, respectively. Interacts with human PSIP1; this interaction may inhibit HIV-1 DNA integration by promoting dissociation of the Integrase-LEDGF/p75 complex. In terms of processing, asymmetrically arginine dimethylated at one site by host PRMT6. Methylation impairs the RNA-binding activity and export of viral RNA from the nucleus to the cytoplasm. Phosphorylated by protein kinase CK2. Presence of, and maybe binding to the N-terminus of the regulatory beta subunit of CK2 is necessary for CK2-mediated Rev's phosphorylation.

The protein localises to the host nucleus. It is found in the host nucleolus. The protein resides in the host cytoplasm. In terms of biological role, escorts unspliced or incompletely spliced viral pre-mRNAs (late transcripts) out of the nucleus of infected cells. These pre-mRNAs carry a recognition sequence called Rev responsive element (RRE) located in the env gene, that is not present in fully spliced viral mRNAs (early transcripts). This function is essential since most viral proteins are translated from unspliced or partially spliced pre-mRNAs which cannot exit the nucleus by the pathway used by fully processed cellular mRNAs. Rev itself is translated from a fully spliced mRNA that readily exits the nucleus. Rev's nuclear localization signal (NLS) binds directly to KPNB1/Importin beta-1 without previous binding to KPNA1/Importin alpha-1. KPNB1 binds to the GDP bound form of RAN (Ran-GDP) and targets Rev to the nucleus. In the nucleus, the conversion from Ran-GDP to Ran-GTP dissociates Rev from KPNB1 and allows Rev's binding to the RRE in viral pre-mRNAs. Rev multimerization on the RRE via cooperative assembly exposes its nuclear export signal (NES) to the surface. Rev can then form a complex with XPO1/CRM1 and Ran-GTP, leading to nuclear export of the complex. Conversion from Ran-GTP to Ran-GDP mediates dissociation of the Rev/RRE/XPO1/RAN complex, so that Rev can return to the nucleus for a subsequent round of export. Beside KPNB1, also seems to interact with TNPO1/Transportin-1, RANBP5/IPO5 and IPO7/RANBP7 for nuclear import. The nucleoporin-like HRB/RIP is an essential cofactor that probably indirectly interacts with Rev to release HIV RNAs from the perinuclear region to the cytoplasm. This is Protein Rev from Human immunodeficiency virus type 1 group M subtype D (isolate Z2/CDC-Z34) (HIV-1).